The following is an 83-amino-acid chain: Cytochrome b559 subunit alpha (83 aa).

A helical membrane pass occupies residues 21–35; sequence VIHSITIPSLFIAGW. Heme is bound at residue H23.

The protein belongs to the PsbE/PsbF family. As to quaternary structure, heterodimer of an alpha subunit and a beta subunit. PSII is composed of 1 copy each of membrane proteins PsbA, PsbB, PsbC, PsbD, PsbE, PsbF, PsbH, PsbI, PsbJ, PsbK, PsbL, PsbM, PsbT, PsbX, PsbY, PsbZ, Psb30/Ycf12, at least 3 peripheral proteins of the oxygen-evolving complex and a large number of cofactors. It forms dimeric complexes. Heme b serves as cofactor.

It is found in the plastid. The protein resides in the chloroplast thylakoid membrane. Functionally, this b-type cytochrome is tightly associated with the reaction center of photosystem II (PSII). PSII is a light-driven water:plastoquinone oxidoreductase that uses light energy to abstract electrons from H(2)O, generating O(2) and a proton gradient subsequently used for ATP formation. It consists of a core antenna complex that captures photons, and an electron transfer chain that converts photonic excitation into a charge separation. The polypeptide is Cytochrome b559 subunit alpha (Zygnema circumcarinatum (Green alga)).